The following is a 236-amino-acid chain: 2-C-methyl-D-erythritol 4-phosphate cytidylyltransferase (236 aa).

The protein belongs to the IspD/TarI cytidylyltransferase family. IspD subfamily.

The enzyme catalyses 2-C-methyl-D-erythritol 4-phosphate + CTP + H(+) = 4-CDP-2-C-methyl-D-erythritol + diphosphate. It participates in isoprenoid biosynthesis; isopentenyl diphosphate biosynthesis via DXP pathway; isopentenyl diphosphate from 1-deoxy-D-xylulose 5-phosphate: step 2/6. Catalyzes the formation of 4-diphosphocytidyl-2-C-methyl-D-erythritol from CTP and 2-C-methyl-D-erythritol 4-phosphate (MEP). This is 2-C-methyl-D-erythritol 4-phosphate cytidylyltransferase from Alkaliphilus oremlandii (strain OhILAs) (Clostridium oremlandii (strain OhILAs)).